The chain runs to 102 residues: MHNRSQGFFFSSCHPQNHVSYGCQSPSFIFCRCQSLNFVSRTCYPLSYFSYGNQTIGSISNSFRSLNYVSHSFQPISFMHSSFQPACSDFVGWQSPFLRRTC.

The protein belongs to the PMG family. Interacts with hair keratins.

In the hair cortex, hair keratin intermediate filaments are embedded in an interfilamentous matrix, consisting of hair keratin-associated proteins (KRTAP), which are essential for the formation of a rigid and resistant hair shaft through their extensive disulfide bond cross-linking with abundant cysteine residues of hair keratins. The matrix proteins include the high-sulfur and high-glycine-tyrosine keratins. The sequence is that of Keratin-associated protein 25-1 (KRTAP25-1) from Homo sapiens (Human).